Reading from the N-terminus, the 1547-residue chain is Fatty acid synthase subunit alpha (1547 aa).

The interval 94–121 (TLPEAHPPPPIDSHQEPSTQTQATHRSA) is disordered. Residues 109–118 (EPSTQTQATH) are compositionally biased toward polar residues. Residues 145 to 221 (LPVSTIVRSL…ETMSIGHNGR (77 aa)) enclose the Carrier domain. S180 carries the post-translational modification O-(pantetheine 4'-phosphoryl)serine. A ketoreductase (KR) domain region spans residues 563 to 798 (GKNVLITGAG…ATLMGGTITT (236 aa)). The region spanning 1004 to 1476 (KESLQEIVLQ…QKGSQAILIH (473 aa)) is the Ketosynthase family 3 (KS3) domain. Active-site for beta-ketoacyl synthase activity residues include C1190 and H1442.

Belongs to the thiolase-like superfamily. Fungal fatty acid synthetase subunit alpha family. Pantetheine 4'-phosphate serves as cofactor.

The catalysed reaction is acetyl-CoA + n malonyl-CoA + 2n NADPH + 4n H(+) = a long-chain-acyl-CoA + n CoA + n CO2 + 2n NADP(+).. It catalyses the reaction a fatty acyl-[ACP] + malonyl-[ACP] + H(+) = a 3-oxoacyl-[ACP] + holo-[ACP] + CO2. It carries out the reaction a (3R)-hydroxyacyl-[ACP] + NADP(+) = a 3-oxoacyl-[ACP] + NADPH + H(+). Its pathway is mycotoxin biosynthesis; HC-toxin biosynthesis. In terms of biological role, fatty acid synthase alpha subunit, part of the diffuse TOX2 gene cluster that mediates the biosynthesis of the HC-toxin, cyclic tetrapeptide of structure cyclo(D-Pro-L-Ala-D-Ala-L-Aeo), where Aeo stands for 2-amino-9,10-epoxi-8-oxodecanoic acid. HC-toxin is a determinant of specificity and virulence in the interaction between the producing fungus and its host, maize. TOXH contribute to the synthesis of the decanoic backbone of 2-amino-9,10-epoxi-8-oxodecanoic acid, an essential precursor for the production of the major forms of HC-toxin by the non-ribosomal peptide synthetase HTS1. The polypeptide is Fatty acid synthase subunit alpha (Cochliobolus carbonum (Maize leaf spot fungus)).